Here is a 414-residue protein sequence, read N- to C-terminus: Nucleoporin NUP42 (414 aa).

A C3H1-type zinc finger spans residues 1 to 25 (MPVCNFFLQGRCRYGDTCWNEHPTG). Disordered stretches follow at residues 24 to 73 (TGGR…RGAA) and 200 to 221 (PPASAPGFGSPGPGFGSATSGF). FG repeat units lie at residues 43–44 (FG), 207–208 (FG), 214–215 (FG), 221–222 (FG), 233–234 (FG), 238–239 (FG), 257–258 (FG), 268–269 (FG), 280–281 (FG), 306–307 (FG), 325–326 (FG), 329–330 (FG), 335–336 (FG), 341–342 (FG), 347–348 (FG), 351–352 (FG), and 362–363 (FG).

Probable component of the nuclear pore complex (NPC).

The protein localises to the nucleus. The protein resides in the nuclear pore complex. It localises to the nucleus membrane. In terms of biological role, required for the export of mRNAs containing poly(A) tails from the nucleus into the cytoplasm. This Danio rerio (Zebrafish) protein is Nucleoporin NUP42 (nup42).